Consider the following 334-residue polypeptide: Glycerol-3-phosphate dehydrogenase [NAD(P)+] (334 aa).

Residues S14, Y15, H35, and K109 each contribute to the NADPH site. Residues K109, G138, and T140 each coordinate sn-glycerol 3-phosphate. A142 serves as a coordination point for NADPH. Sn-glycerol 3-phosphate is bound by residues K194, D247, S257, R258, and N259. K194 acts as the Proton acceptor in catalysis. R258 serves as a coordination point for NADPH. V282 and E284 together coordinate NADPH.

It belongs to the NAD-dependent glycerol-3-phosphate dehydrogenase family.

The protein localises to the cytoplasm. It carries out the reaction sn-glycerol 3-phosphate + NAD(+) = dihydroxyacetone phosphate + NADH + H(+). It catalyses the reaction sn-glycerol 3-phosphate + NADP(+) = dihydroxyacetone phosphate + NADPH + H(+). Its pathway is membrane lipid metabolism; glycerophospholipid metabolism. Functionally, catalyzes the reduction of the glycolytic intermediate dihydroxyacetone phosphate (DHAP) to sn-glycerol 3-phosphate (G3P), the key precursor for phospholipid synthesis. This chain is Glycerol-3-phosphate dehydrogenase [NAD(P)+], found in Aeromonas hydrophila subsp. hydrophila (strain ATCC 7966 / DSM 30187 / BCRC 13018 / CCUG 14551 / JCM 1027 / KCTC 2358 / NCIMB 9240 / NCTC 8049).